The primary structure comprises 307 residues: L-lactate dehydrogenase (307 aa).

Residues valine 13, aspartate 34, arginine 39, tyrosine 64, and 78–79 (GV) each bind NAD(+). Residue arginine 87 coordinates substrate. Position 100 (serine 100) interacts with NAD(+). A substrate-binding site is contributed by 119 to 122 (NPVD). Threonine 142 contacts NAD(+). Residue 147-150 (DSAR) participates in substrate binding. Histidine 174 acts as the Proton acceptor in catalysis. Substrate is bound at residue threonine 224.

This sequence belongs to the LDH/MDH superfamily. LDH family. As to quaternary structure, homotetramer.

The protein resides in the cytoplasm. It catalyses the reaction (S)-lactate + NAD(+) = pyruvate + NADH + H(+). The protein operates within fermentation; pyruvate fermentation to lactate; (S)-lactate from pyruvate: step 1/1. Catalyzes the conversion of lactate to pyruvate. The protein is L-lactate dehydrogenase of Lactobacillus delbrueckii subsp. bulgaricus (strain ATCC BAA-365 / Lb-18).